A 272-amino-acid polypeptide reads, in one-letter code: 3-methyl-2-oxobutanoate hydroxymethyltransferase (272 aa).

Mg(2+) is bound by residues Asp52 and Asp91. Residues 52–53, Asp91, and Lys121 each bind 3-methyl-2-oxobutanoate; that span reads DS. Glu123 provides a ligand contact to Mg(2+). The active-site Proton acceptor is Glu190.

This sequence belongs to the PanB family. Homodecamer; pentamer of dimers. Mg(2+) serves as cofactor.

The protein localises to the cytoplasm. The enzyme catalyses 3-methyl-2-oxobutanoate + (6R)-5,10-methylene-5,6,7,8-tetrahydrofolate + H2O = 2-dehydropantoate + (6S)-5,6,7,8-tetrahydrofolate. Its pathway is cofactor biosynthesis; (R)-pantothenate biosynthesis; (R)-pantoate from 3-methyl-2-oxobutanoate: step 1/2. Catalyzes the reversible reaction in which hydroxymethyl group from 5,10-methylenetetrahydrofolate is transferred onto alpha-ketoisovalerate to form ketopantoate. This is 3-methyl-2-oxobutanoate hydroxymethyltransferase from Flavobacterium johnsoniae (strain ATCC 17061 / DSM 2064 / JCM 8514 / BCRC 14874 / CCUG 350202 / NBRC 14942 / NCIMB 11054 / UW101) (Cytophaga johnsonae).